The primary structure comprises 202 residues: Transmembrane 4 L6 family member 4 (202 aa).

At 1-9 the chain is on the cytoplasmic side; that stretch reads MCTGGCARC. A helical transmembrane segment spans residues 10–30; that stretch reads LGGTLIPLAVFGLLANILLFF. The Extracellular segment spans residues 31–48; the sequence is PGGKVVNDKSHLSDEVWY. The chain crosses the membrane as a helical span at residues 49-69; it reads FGGILGSGVLMIFPALVFLGL. Topologically, residues 70–93 are cytoplasmic; sequence QNNDCCGCCGNEGCGKRFAMFTST. Residues 94–114 traverse the membrane as a helical segment; that stretch reads LFAVIGFLGAGYSFIVSAVSI. Residues 115 to 158 are Extracellular-facing; the sequence is NKGPKCFMANGTWGYPFHDGDYLKDQALWSECEEPRDVVPWNLT. Asn-156 carries N-linked (GlcNAc...) asparagine glycosylation. The chain crosses the membrane as a helical span at residues 159–179; sequence LFSILLVIGGIQMVLCAIQVI. Over 180–202 the chain is Cytoplasmic; it reads NGLLGTLCGDCQCCGCCGGDGPV.

It belongs to the L6 tetraspanin family.

It is found in the membrane. Its function is as follows. Regulates the adhesive and proliferative status of intestinal epithelial cells. Can mediate density-dependent cell proliferation. The sequence is that of Transmembrane 4 L6 family member 4 (Tm4sf4) from Mus musculus (Mouse).